The following is a 353-amino-acid chain: Phosphate acyltransferase (353 aa).

It belongs to the PlsX family. As to quaternary structure, homodimer. Probably interacts with PlsY.

The protein resides in the cytoplasm. It catalyses the reaction a fatty acyl-[ACP] + phosphate = an acyl phosphate + holo-[ACP]. The protein operates within lipid metabolism; phospholipid metabolism. Catalyzes the reversible formation of acyl-phosphate (acyl-PO(4)) from acyl-[acyl-carrier-protein] (acyl-ACP). This enzyme utilizes acyl-ACP as fatty acyl donor, but not acyl-CoA. This chain is Phosphate acyltransferase, found in Rhodopseudomonas palustris (strain BisB18).